Reading from the N-terminus, the 1534-residue chain is DNA-directed RNA polymerase subunit beta'' (1534 aa).

Cysteine 220, cysteine 296, cysteine 303, and cysteine 306 together coordinate Zn(2+). Basic and acidic residues-rich tracts occupy residues 644–668 and 678–688; these read RTQE…RTRE and PENKYRTREGE. Disordered stretches follow at residues 644–698 and 719–800; these read RTQE…EDEY and YRTL…KKEG. 2 stretches are compositionally biased toward acidic residues: residues 744-762 and 770-789; these read GEYE…SSED and TLEE…EYGS.

It belongs to the RNA polymerase beta' chain family. RpoC2 subfamily. In plastids the minimal PEP RNA polymerase catalytic core is composed of four subunits: alpha, beta, beta', and beta''. When a (nuclear-encoded) sigma factor is associated with the core the holoenzyme is formed, which can initiate transcription. Zn(2+) serves as cofactor.

It is found in the plastid. It localises to the chloroplast. It catalyses the reaction RNA(n) + a ribonucleoside 5'-triphosphate = RNA(n+1) + diphosphate. Functionally, DNA-dependent RNA polymerase catalyzes the transcription of DNA into RNA using the four ribonucleoside triphosphates as substrates. The polypeptide is DNA-directed RNA polymerase subunit beta'' (Saccharum hybrid (Sugarcane)).